A 369-amino-acid chain; its full sequence is Pyruvate dehydrogenase E1 component subunit alpha (369 aa).

In terms of assembly, heterodimer of an alpha and a beta chain. The cofactor is thiamine diphosphate.

It carries out the reaction N(6)-[(R)-lipoyl]-L-lysyl-[protein] + pyruvate + H(+) = N(6)-[(R)-S(8)-acetyldihydrolipoyl]-L-lysyl-[protein] + CO2. Functionally, the pyruvate dehydrogenase complex catalyzes the overall conversion of pyruvate to acetyl-CoA and CO(2). It contains multiple copies of three enzymatic components: pyruvate dehydrogenase (E1), dihydrolipoamide acetyltransferase (E2) and lipoamide dehydrogenase (E3). The polypeptide is Pyruvate dehydrogenase E1 component subunit alpha (pdhA) (Geobacillus stearothermophilus (Bacillus stearothermophilus)).